Here is a 196-residue protein sequence, read N- to C-terminus: NADH-quinone oxidoreductase subunit C (196 aa).

It belongs to the complex I 30 kDa subunit family. NDH-1 is composed of 14 different subunits. Subunits NuoB, C, D, E, F, and G constitute the peripheral sector of the complex.

Its subcellular location is the cell inner membrane. It catalyses the reaction a quinone + NADH + 5 H(+)(in) = a quinol + NAD(+) + 4 H(+)(out). Functionally, NDH-1 shuttles electrons from NADH, via FMN and iron-sulfur (Fe-S) centers, to quinones in the respiratory chain. The immediate electron acceptor for the enzyme in this species is believed to be ubiquinone. Couples the redox reaction to proton translocation (for every two electrons transferred, four hydrogen ions are translocated across the cytoplasmic membrane), and thus conserves the redox energy in a proton gradient. This chain is NADH-quinone oxidoreductase subunit C, found in Rickettsia bellii (strain RML369-C).